Reading from the N-terminus, the 320-residue chain is Cytochrome f (320 aa).

Residues 1-35 (MQTRNTLSWIKEEITRSISVSLMIYIITWASISNA) form the signal peptide. Residues Tyr36, Cys56, Cys59, and His60 each coordinate heme. A helical transmembrane segment spans residues 286-306 (VQGLLFFLASVVLAQIFLVLK).

It belongs to the cytochrome f family. As to quaternary structure, the 4 large subunits of the cytochrome b6-f complex are cytochrome b6, subunit IV (17 kDa polypeptide, petD), cytochrome f and the Rieske protein, while the 4 small subunits are PetG, PetL, PetM and PetN. The complex functions as a dimer. Heme is required as a cofactor.

Its subcellular location is the plastid. It is found in the chloroplast thylakoid membrane. Component of the cytochrome b6-f complex, which mediates electron transfer between photosystem II (PSII) and photosystem I (PSI), cyclic electron flow around PSI, and state transitions. This Carica papaya (Papaya) protein is Cytochrome f.